The following is a 275-amino-acid chain: Gibberellin-regulated protein 14 (275 aa).

The N-terminal stretch at 1 to 21 is a signal peptide; it reads MALSLLSVFIFFHVFTNVVFA. The interval 34 to 207 is disordered; it reads PTPTLPSPSP…TAPPVKPPTP (174 aa). A compositionally biased stretch (pro residues) spans 36–207; the sequence is PTLPSPSPAT…TAPPVKPPTP (172 aa).

The protein belongs to the GASA family. In terms of processing, six disulfide bonds may be present. As to expression, expressed in flower abscission zone, style, stamen filaments and lateral roots.

Its subcellular location is the secreted. Functionally, gibberellin-regulated protein that may function in hormonal controlled steps of development such as seed germination, flowering and seed maturation. This chain is Gibberellin-regulated protein 14 (GASA14), found in Arabidopsis thaliana (Mouse-ear cress).